The chain runs to 251 residues: Probable transcriptional regulatory protein MSMEG_2940/MSMEI_2866 (251 aa).

The protein belongs to the TACO1 family.

Its subcellular location is the cytoplasm. The polypeptide is Probable transcriptional regulatory protein MSMEG_2940/MSMEI_2866 (Mycolicibacterium smegmatis (strain ATCC 700084 / mc(2)155) (Mycobacterium smegmatis)).